Here is a 221-residue protein sequence, read N- to C-terminus: Phosphatidylserine decarboxylase proenzyme (221 aa).

Serine 189 serves as the catalytic Schiff-base intermediate with substrate; via pyruvic acid. Residue serine 189 is modified to Pyruvic acid (Ser); by autocatalysis.

It belongs to the phosphatidylserine decarboxylase family. PSD-A subfamily. Heterodimer of a large membrane-associated beta subunit and a small pyruvoyl-containing alpha subunit. Pyruvate serves as cofactor. Is synthesized initially as an inactive proenzyme. Formation of the active enzyme involves a self-maturation process in which the active site pyruvoyl group is generated from an internal serine residue via an autocatalytic post-translational modification. Two non-identical subunits are generated from the proenzyme in this reaction, and the pyruvate is formed at the N-terminus of the alpha chain, which is derived from the carboxyl end of the proenzyme. The post-translation cleavage follows an unusual pathway, termed non-hydrolytic serinolysis, in which the side chain hydroxyl group of the serine supplies its oxygen atom to form the C-terminus of the beta chain, while the remainder of the serine residue undergoes an oxidative deamination to produce ammonia and the pyruvoyl prosthetic group on the alpha chain.

The protein localises to the cell membrane. The enzyme catalyses a 1,2-diacyl-sn-glycero-3-phospho-L-serine + H(+) = a 1,2-diacyl-sn-glycero-3-phosphoethanolamine + CO2. Its pathway is phospholipid metabolism; phosphatidylethanolamine biosynthesis; phosphatidylethanolamine from CDP-diacylglycerol: step 2/2. In terms of biological role, catalyzes the formation of phosphatidylethanolamine (PtdEtn) from phosphatidylserine (PtdSer). This is Phosphatidylserine decarboxylase proenzyme from Porphyromonas gingivalis (strain ATCC 33277 / DSM 20709 / CIP 103683 / JCM 12257 / NCTC 11834 / 2561).